Here is a 437-residue protein sequence, read N- to C-terminus: Adenosylhomocysteinase (437 aa).

Residues T58, D133, and E158 each coordinate substrate. 159 to 161 (TTT) lines the NAD(+) pocket. Residues K188 and D192 each coordinate substrate. NAD(+)-binding positions include N193, 224–229 (GDVGKG), E245, 301–303 (VGH), and N348.

This sequence belongs to the adenosylhomocysteinase family. In terms of assembly, homotetramer. Requires NAD(+) as cofactor.

It catalyses the reaction S-adenosyl-L-homocysteine + H2O = L-homocysteine + adenosine. It participates in amino-acid biosynthesis; L-homocysteine biosynthesis; L-homocysteine from S-adenosyl-L-homocysteine: step 1/1. In terms of biological role, adenosylhomocysteine is a competitive inhibitor of S-adenosyl-L-methionine-dependent methyl transferase reactions; therefore adenosylhomocysteinase may play a key role in the control of methylations via regulation of the intracellular concentration of adenosylhomocysteine. The sequence is that of Adenosylhomocysteinase (ahcy-1) from Caenorhabditis elegans.